The sequence spans 72 residues: Alpha-mammal toxin Bot3 (72 aa).

The N-terminal stretch at 1 to 8 (LVMAGVES) is a signal peptide. The LCN-type CS-alpha/beta domain maps to 10 to 72 (KDGYIVDDRN…VRTKGPGRCN (63 aa)). Intrachain disulfides connect cysteine 20/cysteine 71, cysteine 24/cysteine 44, cysteine 30/cysteine 54, and cysteine 34/cysteine 56. Asparagine 72 bears the Asparagine amide mark.

The protein belongs to the long (4 C-C) scorpion toxin superfamily. Sodium channel inhibitor family. Alpha subfamily. Post-translationally, when the toxin is not amidated, there are 75% loss of toxicity to mice, and total incapacity to bind rat brain synaptosomes. As to expression, expressed by the venom gland.

Its subcellular location is the secreted. Functionally, alpha toxins bind voltage-independently at site-3 of sodium channels (Nav) and inhibit the inactivation of the activated channels, thereby blocking neuronal transmission. Is active against mammals and binds with high affinity to rat brain synaptosomes. This chain is Alpha-mammal toxin Bot3, found in Buthus occitanus tunetanus (Common European scorpion).